The sequence spans 809 residues: Putative zinc metalloprotease TRE2 (809 aa).

Composition is skewed to polar residues over residues 1–12 (MRSSYQPVSTTN) and 20–30 (PTASSSHNLLM). Positions 1-66 (MRSSYQPVST…PSYEFDIEDP (66 aa)) are disordered. The Cytoplasmic portion of the chain corresponds to 1–125 (MRSSYQPVST…KIGNPFILRR (125 aa)). Low complexity predominate over residues 37-50 (SPPSSNDNSIETNI). A helical; Signal-anchor for type II membrane protein transmembrane segment spans residues 126 to 146 (FFYIIFMSFIAYYVLSSGYLF). Residues 147–809 (NEKASGSKGM…VEETNDIGYK (663 aa)) are Extracellular-facing. Asparagine 228 carries N-linked (GlcNAc...) asparagine glycosylation. The PA domain occupies 255–349 (SNGKLSKVSL…STGDASGLNW (95 aa)). Residues asparagine 669 and asparagine 736 are each glycosylated (N-linked (GlcNAc...) asparagine).

This sequence belongs to the peptidase M28 family. M28B subfamily.

It is found in the membrane. This Saccharomyces cerevisiae (strain ATCC 204508 / S288c) (Baker's yeast) protein is Putative zinc metalloprotease TRE2 (TRE2).